The primary structure comprises 1234 residues: 1-phosphatidylinositol 4,5-bisphosphate phosphodiesterase beta-3 (1234 aa).

A2 bears the N-acetylalanine mark. Residues 315–466 (MDMTQPLSAY…LMGRILVKNK (152 aa)) form the PI-PLC X-box domain. Catalysis depends on residues H330 and H377. Residues 465-586 (NKKRHRPSTG…GTASSEVNAT (122 aa)) are disordered. Phosphoserine occurs at positions 472, 488, 493, and 535. Residues 486-513 (EQSNSALSESSAATEPSSPQLGSPSSDS) are compositionally biased toward low complexity. A compositionally biased stretch (acidic residues) spans 554–566 (REDEEEDEEEEET). Residues 577 to 586 (GTASSEVNAT) show a composition bias toward polar residues. The 117-residue stretch at 589–705 (MSTLVNYVEP…GYLLKPEFMR (117 aa)) folds into the PI-PLC Y-box domain. In terms of domain architecture, C2 spans 706–834 (RPDKSFDPFT…RNEANQPLCL (129 aa)). Residues 886 to 907 (ASTEMCQETPSQQQGSQLSSNP) are compositionally biased toward polar residues. Residues 886–936 (ASTEMCQETPSQQQGSQLSSNPVPNPLDDSPRWPPGPTTSPTSTSLSSPGQ) form a disordered region. The segment covering 924–934 (TSPTSTSLSSP) has biased composition (low complexity). 2 positions are modified to phosphoserine: S925 and S1105. The tract at residues 1196–1234 (SEGLGDGPLVACASNGHAAGSGGHQSGADSESQEENTQL) is disordered. The segment at 1231–1234 (NTQL) is interaction with SHANK2.

As to quaternary structure, interacts with LPAR2. Interacts with SHANK2. Requires Ca(2+) as cofactor. In terms of tissue distribution, expressed in parotid gland, brain, liver, uterus, lung, heart, adrenal gland, and ovary. Not detected in spleen, pancreas, intestine, thymus or kidney.

Its subcellular location is the cytoplasm. It localises to the membrane. It is found in the nucleus. The catalysed reaction is a 1,2-diacyl-sn-glycero-3-phospho-(1D-myo-inositol-4,5-bisphosphate) + H2O = 1D-myo-inositol 1,4,5-trisphosphate + a 1,2-diacyl-sn-glycerol + H(+). The enzyme catalyses a 1,2-diacyl-sn-glycero-3-phospho-(1D-myo-inositol) + H2O = 1D-myo-inositol 1-phosphate + a 1,2-diacyl-sn-glycerol + H(+). With respect to regulation, activated by G(q)/G(11) G alpha proteins in response to ligand-binding to G protein-coupled receptors. Its function is as follows. Catalyzes the production of the second messenger molecules diacylglycerol (DAG) and inositol 1,4,5-trisphosphate (IP3). Key transducer of G protein-coupled receptor signaling: activated by G(q)/G(11) G alpha proteins downstream of G protein-coupled receptors activation. In neutrophils, participates in a phospholipase C-activating N-formyl peptide-activated GPCR (G protein-coupled receptor) signaling pathway by promoting RASGRP4 activation by DAG, to promote neutrophil functional responses. This chain is 1-phosphatidylinositol 4,5-bisphosphate phosphodiesterase beta-3, found in Rattus norvegicus (Rat).